A 290-amino-acid chain; its full sequence is Arylamine N-acetyltransferase 2 (290 aa).

The active-site Acyl-thioester intermediate is the Cys-68. Ser-103 and Gly-104 together coordinate CoA. Substrate is bound at residue 106–107 (IH). Catalysis depends on residues His-107 and Asp-122. Tyr-208 is a CoA binding site.

This sequence belongs to the arylamine N-acetyltransferase family.

The protein localises to the cytoplasm. It catalyses the reaction an arylamine + acetyl-CoA = an N-acetylarylamine + CoA. The catalysed reaction is an N-hydroxyarylamine + acetyl-CoA = an N-acetoxyarylamine + CoA. Functionally, catalyzes the N- or O-acetylation of various arylamine and heterocyclic amine substrates, and participates in the detoxification of a plethora of hydrazine and arylamine drugs. This is Arylamine N-acetyltransferase 2 (NAT2) from Mesocricetus auratus (Golden hamster).